The sequence spans 442 residues: G-protein coupled receptor family C group 5 member C (442 aa).

The N-terminal stretch at 1–23 (MAIHRTVLMCLGLPLFLLPGARA) is a signal peptide. The Extracellular segment spans residues 24–50 (QEQAPPGCSPDLNPLYYNLCDRSEAWG). Residues 51-71 (IILEAVAGAGVVTTFVLTIIL) traverse the membrane as a helical segment. Topologically, residues 72–85 (VASLPFVQDTKKRS) are cytoplasmic. The chain crosses the membrane as a helical span at residues 86–106 (LLGTQVFFLLGTLGLFCLVFA). Residues 107-120 (CVVKPSFSTCASRR) are Extracellular-facing. Residues 121-141 (FLFGVLFAICFSCLVAHVLAL) traverse the membrane as a helical segment. Residues 142 to 155 (HFLVRKNHGPRGWV) are Cytoplasmic-facing. A helical transmembrane segment spans residues 156 to 176 (IFLVALLLSLVEVIINTEWLI). Over 177–209 (ITLVRGAGTEGDALGNGSAGWVAVSPCAIANAD) the chain is Extracellular. An N-linked (GlcNAc...) asparagine glycan is attached at asparagine 192. Residues 210–230 (FVMALIYVMLLLLCAFSGAWS) traverse the membrane as a helical segment. Topologically, residues 231 to 242 (ALCGRFKRWRKH) are cytoplasmic. Residues 243–263 (GVFILLTTTASIAVWVVWIVM) form a helical membrane-spanning segment. Over 264 to 280 (YTYGNRQHNSPTWDDPT) the chain is Extracellular. The helical transmembrane segment at 281 to 301 (LAIALATNAWAFVLFYVIPEV) threads the bilayer. The Cytoplasmic segment spans residues 302–442 (SQVTRSSPEQ…QVFRNPYVWD (141 aa)). Residues serine 345, serine 384, serine 404, and serine 407 each carry the phosphoserine modification. Position 415 is a phosphotyrosine (tyrosine 415). At threonine 424 the chain carries Phosphothreonine.

This sequence belongs to the G-protein coupled receptor 3 family.

It is found in the cell membrane. In terms of biological role, this retinoic acid-inducible G-protein coupled receptor provide evidence for a possible interaction between retinoid and G-protein signaling pathways. This Bos taurus (Bovine) protein is G-protein coupled receptor family C group 5 member C (GPRC5C).